The following is a 397-amino-acid chain: UDP-GlcNAc:betaGal beta-1,3-N-acetylglucosaminyltransferase 7 (397 aa).

Over 1–6 (MSLWKK) the chain is Cytoplasmic. A helical transmembrane segment spans residues 7 to 26 (TLYKSVCLALALLVAVTVFQ). Topologically, residues 27–397 (RSVTPGQFLQ…LTCSVKFQVL (371 aa)) are lumenal. N-linked (GlcNAc...) asparagine glycans are attached at residues Asn84, Asn90, Asn210, and Asn387.

This sequence belongs to the glycosyltransferase 31 family. In terms of tissue distribution, strongly expressed in placenta and colon. Moderately expressed in lung, stomach, small intestine and kidney. Very weakly expressed in cerebrum, cerebellum, heart and testis.

The protein resides in the golgi apparatus membrane. It participates in protein modification; protein glycosylation. Functionally, N-acetyl glucosamine (GlcNAc) transferase that catalyzes the transfer of GlcNAc via a beta1-&gt;3 linkage from UDP-GlcNAc to the non-reducing terminal galactose (Gal) in the linearly growing chain of N- and O-linked keratan sulfate proteoglycans. Cooperates with B4GALT4 galactosyltransferase and CHST6 and CHST1 sulfotransferases to construct and elongate mono- and disulfated disaccharide units [-&gt;3Galbeta1-&gt;4(6-sulfoGlcNAcbeta)1-&gt;] and [-&gt;3(6-sulfoGalbeta)1-&gt;4(6-sulfoGlcNAcbeta)1-&gt;] within keratan sulfate polymer. Involved in biosynthesis of N-linked keratan sulfate proteoglycans in cornea, with an impact on proteoglycan fibril organization and corneal transparency. May play a role in the maintenance of tissue architecture by suppressing cellular motility and invasion. The protein is UDP-GlcNAc:betaGal beta-1,3-N-acetylglucosaminyltransferase 7 (B3gnt7) of Mus musculus (Mouse).